Here is a 190-residue protein sequence, read N- to C-terminus: Potassium-transporting ATPase KdpC subunit (190 aa).

The chain crosses the membrane as a helical span at residues 10 to 30 (TFIFLLLITGGVYPLLTTVLG).

Belongs to the KdpC family. In terms of assembly, the system is composed of three essential subunits: KdpA, KdpB and KdpC.

It localises to the cell inner membrane. Its function is as follows. Part of the high-affinity ATP-driven potassium transport (or Kdp) system, which catalyzes the hydrolysis of ATP coupled with the electrogenic transport of potassium into the cytoplasm. This subunit acts as a catalytic chaperone that increases the ATP-binding affinity of the ATP-hydrolyzing subunit KdpB by the formation of a transient KdpB/KdpC/ATP ternary complex. The polypeptide is Potassium-transporting ATPase KdpC subunit (Escherichia coli (strain K12 / MC4100 / BW2952)).